The primary structure comprises 617 residues: Probable endochitinase (617 aa).

A GH18 domain is found at 53–426 (YIRPCYFTNW…SVIAKELGGV (374 aa)). The cysteines at positions 57 and 82 are disulfide-linked. Chitin contacts are provided by residues 109 to 110 (DW) and 136 to 139 (GGWS). The active-site Proton donor is Glu179. Residues Tyr180 and 245-248 (MSYD) each bind chitin. An N-linked (GlcNAc...) asparagine glycan is attached at Asn310. Chitin is bound at residue Trp394. Chitin-binding type-2 domains lie at 478-534 (TNVC…GCSV) and 563-617 (AFKC…KCAK). 2 disulfides stabilise this stretch: Cys511/Cys524 and Cys594/Cys607.

It belongs to the glycosyl hydrolase 18 family. Chitinase class II subfamily.

The enzyme catalyses Random endo-hydrolysis of N-acetyl-beta-D-glucosaminide (1-&gt;4)-beta-linkages in chitin and chitodextrins.. This chain is Probable endochitinase (cht-1), found in Caenorhabditis elegans.